A 485-amino-acid polypeptide reads, in one-letter code: MLLLELKKTNQTLETIHFIGIGGVGMSGIAEILYNLGYKVQGSDLVENYNTKRLESYGIKIFLGHAEQNITNVSYVVISSAINPKNPEIKEALERKIPIIRRADMLAELMRLKCSVAVSGSHGKTTTTSLVACLFEAAGLCPTVINGGIINNKSTNAYLGSSNYLIAEADESDATFIHIPSTIAIITNIDPEHLDYYRDFETLIGAFRSFITNLPFYGFAVCCIDHKIVRKLVDDITERKIVTYGIDSEDAHIIAFNINTDIASSTFDVKISLPNVLGTTIIEKITIPTPGRHNILNSLAAIAVGIELDFGIKAIKNGFNNFKGVKRRFTKVAEYNNASIIDDYAHHPEEIKATLATAKNIANKQNGKVIAIFQPHRYSRMQYLFDDFMFCFADADILYITDIYAAGENPIEGITGRNLVDKITKRKHHDKANFLAELDDAVGVIIDNAASGDMIIMMGAGNISSFANELEGRLSSRGFSCHTVV.

120–126 (GSHGKTT) contacts ATP.

It belongs to the MurCDEF family.

It is found in the cytoplasm. The catalysed reaction is UDP-N-acetyl-alpha-D-muramate + L-alanine + ATP = UDP-N-acetyl-alpha-D-muramoyl-L-alanine + ADP + phosphate + H(+). It participates in cell wall biogenesis; peptidoglycan biosynthesis. In terms of biological role, cell wall formation. The chain is UDP-N-acetylmuramate--L-alanine ligase from Rickettsia africae (strain ESF-5).